The primary structure comprises 358 residues: UDP-N-acetylglucosamine--N-acetylmuramyl-(pentapeptide) pyrophosphoryl-undecaprenol N-acetylglucosamine transferase (358 aa).

Residues Thr-10–Gly-12, Asn-124, Arg-165, Ser-191, Ile-246, and Gln-291 contribute to the UDP-N-acetyl-alpha-D-glucosamine site.

The protein belongs to the glycosyltransferase 28 family. MurG subfamily.

The protein resides in the cell inner membrane. The catalysed reaction is di-trans,octa-cis-undecaprenyl diphospho-N-acetyl-alpha-D-muramoyl-L-alanyl-D-glutamyl-meso-2,6-diaminopimeloyl-D-alanyl-D-alanine + UDP-N-acetyl-alpha-D-glucosamine = di-trans,octa-cis-undecaprenyl diphospho-[N-acetyl-alpha-D-glucosaminyl-(1-&gt;4)]-N-acetyl-alpha-D-muramoyl-L-alanyl-D-glutamyl-meso-2,6-diaminopimeloyl-D-alanyl-D-alanine + UDP + H(+). Its pathway is cell wall biogenesis; peptidoglycan biosynthesis. In terms of biological role, cell wall formation. Catalyzes the transfer of a GlcNAc subunit on undecaprenyl-pyrophosphoryl-MurNAc-pentapeptide (lipid intermediate I) to form undecaprenyl-pyrophosphoryl-MurNAc-(pentapeptide)GlcNAc (lipid intermediate II). This Citrifermentans bemidjiense (strain ATCC BAA-1014 / DSM 16622 / JCM 12645 / Bem) (Geobacter bemidjiensis) protein is UDP-N-acetylglucosamine--N-acetylmuramyl-(pentapeptide) pyrophosphoryl-undecaprenol N-acetylglucosamine transferase.